A 513-amino-acid polypeptide reads, in one-letter code: Histidine ammonia-lyase (513 aa).

The segment at residues 146-148 (ASG) is a cross-link (5-imidazolinone (Ala-Gly)). Position 147 is a 2,3-didehydroalanine (Ser) (serine 147).

The protein belongs to the PAL/histidase family. Contains an active site 4-methylidene-imidazol-5-one (MIO), which is formed autocatalytically by cyclization and dehydration of residues Ala-Ser-Gly.

Its subcellular location is the cytoplasm. The catalysed reaction is L-histidine = trans-urocanate + NH4(+). It functions in the pathway amino-acid degradation; L-histidine degradation into L-glutamate; N-formimidoyl-L-glutamate from L-histidine: step 1/3. The sequence is that of Histidine ammonia-lyase from Caulobacter vibrioides (strain NA1000 / CB15N) (Caulobacter crescentus).